Here is a 172-residue protein sequence, read N- to C-terminus: 3-hydroxydecanoyl-[acyl-carrier-protein] dehydratase (172 aa).

Histidine 71 is a catalytic residue.

This sequence belongs to the thioester dehydratase family. FabA subfamily. As to quaternary structure, homodimer.

It localises to the cytoplasm. It carries out the reaction a (3R)-hydroxyacyl-[ACP] = a (2E)-enoyl-[ACP] + H2O. The catalysed reaction is (3R)-hydroxydecanoyl-[ACP] = (2E)-decenoyl-[ACP] + H2O. It catalyses the reaction (2E)-decenoyl-[ACP] = (3Z)-decenoyl-[ACP]. The protein operates within lipid metabolism; fatty acid biosynthesis. Necessary for the introduction of cis unsaturation into fatty acids. Catalyzes the dehydration of (3R)-3-hydroxydecanoyl-ACP to E-(2)-decenoyl-ACP and then its isomerization to Z-(3)-decenoyl-ACP. Can catalyze the dehydratase reaction for beta-hydroxyacyl-ACPs with saturated chain lengths up to 16:0, being most active on intermediate chain length. This is 3-hydroxydecanoyl-[acyl-carrier-protein] dehydratase from Aliivibrio salmonicida (strain LFI1238) (Vibrio salmonicida (strain LFI1238)).